A 187-amino-acid polypeptide reads, in one-letter code: Elongation factor P (187 aa).

It belongs to the elongation factor P family.

The protein localises to the cytoplasm. It functions in the pathway protein biosynthesis; polypeptide chain elongation. In terms of biological role, involved in peptide bond synthesis. Stimulates efficient translation and peptide-bond synthesis on native or reconstituted 70S ribosomes in vitro. Probably functions indirectly by altering the affinity of the ribosome for aminoacyl-tRNA, thus increasing their reactivity as acceptors for peptidyl transferase. This chain is Elongation factor P, found in Thermodesulfovibrio yellowstonii (strain ATCC 51303 / DSM 11347 / YP87).